Consider the following 678-residue polypeptide: Auxin response factor 7 (678 aa).

The segment at residues Phe128 to Met230 is a DNA-binding region (TF-B3). Disordered regions lie at residues Ala360 to Ala386 and Gly502 to Val547. In terms of domain architecture, PB1 spans Arg548–Lys641. Positions Pro643–Cys678 are disordered.

It belongs to the ARF family. As to quaternary structure, homodimers and heterodimers. As to expression, expressed in roots, culms, leaves and young panicles.

It is found in the nucleus. Its function is as follows. Auxin response factors (ARFs) are transcriptional factors that bind specifically to the DNA sequence 5'-TGTCTC-3' found in the auxin-responsive promoter elements (AuxREs). This Oryza sativa subsp. japonica (Rice) protein is Auxin response factor 7 (ARF7).